Reading from the N-terminus, the 285-residue chain is Probable glucose uptake protein GlcU (285 aa).

10 helical membrane-spanning segments follow: residues 4–21 (FLAILPAIFWGSIVLFNV), 26–48 (GPYSQTLGTTFGALIFSIVVYIF), 52–71 (VLTPTVIGVGIVSGLFWALG), 84–106 (VSRTMPISTGLQLVSTTLFGVIV), 110–132 (WSTIISVVLGVLALVCIIIGVIL), 153–175 (IIILLISTVGYLVYVVVIRLFNV), 180–197 (ALLPQAVGMVLGGILLTF), 210–227 (IIPGLIWAAGNMFLFISQ), 232–254 (VATSFSLSQMGIIISTLGGILIL), and 266–283 (IVVGIVFIIAAGIMLGIA).

The protein belongs to the GRP transporter (TC 2.A.7.5) family.

The protein resides in the cell membrane. In terms of biological role, involved in the uptake of glucose. This chain is Probable glucose uptake protein GlcU (glcU), found in Bacillus anthracis.